A 461-amino-acid polypeptide reads, in one-letter code: Photosystem II CP43 reaction center protein (461 aa).

Positions Met-1 to Glu-2 are excised as a propeptide. Thr-3 is subject to N-acetylthreonine. Position 3 is a phosphothreonine (Thr-3). The next 5 membrane-spanning stretches (helical) occupy residues Leu-57–Ala-81, Leu-122–Asn-143, Lys-166–Thr-188, Lys-243–Ser-263, and Trp-279–Ala-300. Glu-355 serves as a coordination point for [CaMn4O5] cluster. A helical membrane pass occupies residues Arg-435–Pro-459.

The protein belongs to the PsbB/PsbC family. PsbC subfamily. PSII is composed of 1 copy each of membrane proteins PsbA, PsbB, PsbC, PsbD, PsbE, PsbF, PsbH, PsbI, PsbJ, PsbK, PsbL, PsbM, PsbT, PsbX, PsbY, PsbZ, Psb30/Ycf12, at least 3 peripheral proteins of the oxygen-evolving complex and a large number of cofactors. It forms dimeric complexes. The cofactor is Binds multiple chlorophylls and provides some of the ligands for the Ca-4Mn-5O cluster of the oxygen-evolving complex. It may also provide a ligand for a Cl- that is required for oxygen evolution. PSII binds additional chlorophylls, carotenoids and specific lipids..

Its subcellular location is the plastid. The protein localises to the chloroplast thylakoid membrane. Functionally, one of the components of the core complex of photosystem II (PSII). It binds chlorophyll and helps catalyze the primary light-induced photochemical processes of PSII. PSII is a light-driven water:plastoquinone oxidoreductase, using light energy to abstract electrons from H(2)O, generating O(2) and a proton gradient subsequently used for ATP formation. The chain is Photosystem II CP43 reaction center protein from Lotus japonicus (Lotus corniculatus var. japonicus).